The following is a 46-amino-acid chain: U1-plectoxin-Pt1f (46 aa).

Intrachain disulfides connect Cys-4–Cys-18, Cys-11–Cys-24, Cys-17–Cys-35, Cys-21–Cys-44, and Cys-26–Cys-33.

The protein belongs to the neurotoxin 02 (plectoxin) family. 02 (plectoxin) subfamily. In terms of tissue distribution, expressed by the venom gland.

It localises to the secreted. In terms of biological role, potent toxin that may paralyze and/or kill insect pests such as H.virescens (lepidoptera), S.exigua (beet armyworm) and M.sexta (tobacco hornworm). The sequence is that of U1-plectoxin-Pt1f from Plectreurys tristis (Spider).